The sequence spans 831 residues: uncharacterized protein (831 aa).

The tract at residues 285-311 is disordered; that stretch reads ALNLKRQQLKEEQKEQQSTGDRSDVST. 470 to 477 contacts ATP; sequence GDTGNGKS.

This is an uncharacterized protein from Bacillus subtilis (strain 168).